Here is a 574-residue protein sequence, read N- to C-terminus: 2-succinyl-5-enolpyruvyl-6-hydroxy-3-cyclohexene-1-carboxylate synthase (574 aa).

This sequence belongs to the TPP enzyme family. MenD subfamily. In terms of assembly, homodimer. Mg(2+) serves as cofactor. Requires Mn(2+) as cofactor. Thiamine diphosphate is required as a cofactor.

The catalysed reaction is isochorismate + 2-oxoglutarate + H(+) = 5-enolpyruvoyl-6-hydroxy-2-succinyl-cyclohex-3-ene-1-carboxylate + CO2. It participates in quinol/quinone metabolism; 1,4-dihydroxy-2-naphthoate biosynthesis; 1,4-dihydroxy-2-naphthoate from chorismate: step 2/7. Its pathway is quinol/quinone metabolism; menaquinone biosynthesis. Catalyzes the thiamine diphosphate-dependent decarboxylation of 2-oxoglutarate and the subsequent addition of the resulting succinic semialdehyde-thiamine pyrophosphate anion to isochorismate to yield 2-succinyl-5-enolpyruvyl-6-hydroxy-3-cyclohexene-1-carboxylate (SEPHCHC). This chain is 2-succinyl-5-enolpyruvyl-6-hydroxy-3-cyclohexene-1-carboxylate synthase, found in Vibrio atlanticus (strain LGP32) (Vibrio splendidus (strain Mel32)).